The following is a 1399-amino-acid chain: DNA-directed RNA polymerase subunit beta' (1399 aa).

Positions 70, 72, 85, and 88 each coordinate Zn(2+). Mg(2+) is bound by residues Asp-460, Asp-462, and Asp-464. Cys-814, Cys-888, Cys-895, and Cys-898 together coordinate Zn(2+).

This sequence belongs to the RNA polymerase beta' chain family. In terms of assembly, the RNAP catalytic core consists of 2 alpha, 1 beta, 1 beta' and 1 omega subunit. When a sigma factor is associated with the core the holoenzyme is formed, which can initiate transcription. The cofactor is Mg(2+). It depends on Zn(2+) as a cofactor.

It carries out the reaction RNA(n) + a ribonucleoside 5'-triphosphate = RNA(n+1) + diphosphate. In terms of biological role, DNA-dependent RNA polymerase catalyzes the transcription of DNA into RNA using the four ribonucleoside triphosphates as substrates. This chain is DNA-directed RNA polymerase subunit beta', found in Pseudomonas fluorescens (strain Pf0-1).